A 202-amino-acid chain; its full sequence is MSEHGPLRIGIGGPVGAGKTTLTERLCAALRDDYSVAVITNDIYTSEDAEYLMRAQALPLERIRGVETGGCPHTAIREDASINLAAVADLRASFADLDVILIESGGDNLAATFSPELADLTIYVIDTAAGQDIPRKKGPGLARSDLLVINKTDLAPHVDVDLALLESDARTARGARPFVMAALKSGQGVAQIVAFLEREGGL.

G13–T20 is a binding site for GTP.

This sequence belongs to the SIMIBI class G3E GTPase family. UreG subfamily. As to quaternary structure, homodimer. UreD, UreF and UreG form a complex that acts as a GTP-hydrolysis-dependent molecular chaperone, activating the urease apoprotein by helping to assemble the nickel containing metallocenter of UreC. The UreE protein probably delivers the nickel.

The protein localises to the cytoplasm. Its function is as follows. Facilitates the functional incorporation of the urease nickel metallocenter. This process requires GTP hydrolysis, probably effectuated by UreG. In Dinoroseobacter shibae (strain DSM 16493 / NCIMB 14021 / DFL 12), this protein is Urease accessory protein UreG.